Here is a 267-residue protein sequence, read N- to C-terminus: Extensin (267 aa).

Residues 1–267 (MCPAFSIFFN…HTPSPPPPYY (267 aa)) are disordered. 13 consecutive repeats follow at residues 18–33 (PPTY…PKPT), 34–54 (PPTY…PKPT), 55–70 (PPTY…PKPT), 71–91 (PPTY…PKPT), 92–107 (PPTY…PKPT), 108–128 (PPTY…PKPT), 129–144 (PPTY…PKPT), 145–160 (PPTY…PKPT), 161–179 (PPTY…PKPT), 180–195 (PPTY…PKPT), 196–211 (PPTY…PKPT), 212–232 (PPTY…PKPT), and 233–253 (PPTY…YTPT). Residues 18–253 (PPTYTPSPKP…ATKPPTYTPT (236 aa)) form a highly repetitive region. The segment covering 20 to 267 (TYTPSPKPPT…HTPSPPPPYY (248 aa)) has biased composition (pro residues). The segment at 261 to 265 (SPPPP) is extensin repetitive element.

Hydroxylated on proline residues in the S-P-P-P-P repeat. In terms of processing, O-glycosylated on hydroxyprolines. In terms of tissue distribution, mainly in the coleoptile node and root tip.

It is found in the secreted. The protein resides in the primary cell wall. Structural component in primary cell wall. In Zea mays (Maize), this protein is Extensin (HRGP).